Consider the following 274-residue polypeptide: 2,3,4,5-tetrahydropyridine-2,6-dicarboxylate N-succinyltransferase (274 aa).

2 residues coordinate substrate: arginine 104 and aspartate 141.

Belongs to the transferase hexapeptide repeat family. As to quaternary structure, homotrimer.

Its subcellular location is the cytoplasm. The enzyme catalyses (S)-2,3,4,5-tetrahydrodipicolinate + succinyl-CoA + H2O = (S)-2-succinylamino-6-oxoheptanedioate + CoA. It participates in amino-acid biosynthesis; L-lysine biosynthesis via DAP pathway; LL-2,6-diaminopimelate from (S)-tetrahydrodipicolinate (succinylase route): step 1/3. In Photorhabdus laumondii subsp. laumondii (strain DSM 15139 / CIP 105565 / TT01) (Photorhabdus luminescens subsp. laumondii), this protein is 2,3,4,5-tetrahydropyridine-2,6-dicarboxylate N-succinyltransferase.